Reading from the N-terminus, the 289-residue chain is Phycobilisome 39 kDa linker polypeptide, phycocyanin-associated, rod (289 aa).

The 179-residue stretch at 2 to 180 folds into the PBS-linker domain; sequence PITSAASRLG…LYRGYANSDR (179 aa). The disordered stretch occupies residues 213–233; the sequence is SYLPSKQGTAPSRTFGRSSQG. A compositionally biased stretch (polar residues) spans 216–233; that stretch reads PSKQGTAPSRTFGRSSQG. Residues 236-288 enclose the CpcD-like domain; sequence PRLYRIEVTGISLPRYPKVRRSNKEFIVPYEQLSSTLQQINKLGGKVASITFA.

It belongs to the phycobilisome linker protein family.

The protein resides in the cellular thylakoid membrane. Rod linker protein, associated with phycocyanin. Linker polypeptides determine the state of aggregation and the location of the disk-shaped phycobiliprotein units within the phycobilisome and modulate their spectroscopic properties in order to mediate a directed and optimal energy transfer. This chain is Phycobilisome 39 kDa linker polypeptide, phycocyanin-associated, rod (cpcI2), found in Microchaete diplosiphon (Fremyella diplosiphon).